Reading from the N-terminus, the 249-residue chain is Probable transcriptional regulatory protein AB57_1731 (249 aa).

It belongs to the TACO1 family.

It localises to the cytoplasm. In Acinetobacter baumannii (strain AB0057), this protein is Probable transcriptional regulatory protein AB57_1731.